The following is a 396-amino-acid chain: Probable sugar efflux transporter (396 aa).

The next 12 helical transmembrane spans lie at 15–35 (VVTL…PVGL), 50–70 (VGIM…PFML), 81–101 (LICL…AWNF), 103–123 (VLVI…SITA), 136–156 (AQAL…GLPI), 169–189 (TFFA…KLLP), 202–222 (LPLL…VVVV), 246–266 (FATV…LVFG), 275–295 (SLVS…LPAA), 301–321 (LAIL…GMQV), 333–353 (VAMA…ALVG), and 364–384 (AIGY…VLIF).

The protein belongs to the major facilitator superfamily. SotB (TC 2.A.1.2) family.

It localises to the cell inner membrane. In terms of biological role, involved in the efflux of sugars. The physiological role may be the reduction of the intracellular concentration of toxic sugars or sugar metabolites. In Salmonella paratyphi A (strain ATCC 9150 / SARB42), this protein is Probable sugar efflux transporter.